A 488-amino-acid chain; its full sequence is Beta-amylase (488 aa).

Residues D51, H91, and D99 each contribute to the substrate site. Residue E184 is the Proton donor of the active site. Positions 293, 298, and 340 each coordinate substrate. The active-site Proton acceptor is E378. Substrate-binding positions include N379–A380 and R418.

Belongs to the glycosyl hydrolase 14 family.

The catalysed reaction is Hydrolysis of (1-&gt;4)-alpha-D-glucosidic linkages in polysaccharides so as to remove successive maltose units from the non-reducing ends of the chains.. The chain is Beta-amylase (BMY1) from Zea mays (Maize).